Reading from the N-terminus, the 300-residue chain is MTLPEDTTTAESLIHTSVLSAEVLEALAPTPGKTIVDGTLGGAGHTRLLLEAGAHVYGIDQDPFALDRAREAGLPNLTVLQGNYRDMVSLLEQAGVSQVDGILLDIGVSSFQLDDAGRGFSYHTEAPLDMRMSQSGESAADVVNTYEEEDLAAIIYEYGEDRLSRRIARAIGQARQKAPIETTVQLAEIVKRAYPGFSKGIHPARRTFQALRIHVNDELGALRDGLQAAETLLRPGGRLAVISFHSLEDRIVKRFLLGSEVLQPLTKRPVVASDEEQAINPRSRSAKLRAAERVVVQEAS.

Residues 43–45 (AGH), D60, D105, and Q112 each bind S-adenosyl-L-methionine.

The protein belongs to the methyltransferase superfamily. RsmH family.

It is found in the cytoplasm. It carries out the reaction cytidine(1402) in 16S rRNA + S-adenosyl-L-methionine = N(4)-methylcytidine(1402) in 16S rRNA + S-adenosyl-L-homocysteine + H(+). Specifically methylates the N4 position of cytidine in position 1402 (C1402) of 16S rRNA. The sequence is that of Ribosomal RNA small subunit methyltransferase H from Deinococcus deserti (strain DSM 17065 / CIP 109153 / LMG 22923 / VCD115).